A 376-amino-acid polypeptide reads, in one-letter code: Erythronate-4-phosphate dehydrogenase (376 aa).

Substrate contacts are provided by Ser45 and Thr67. Position 147 (Asp147) interacts with NAD(+). Arg209 is an active-site residue. Asp233 is an NAD(+) binding site. Glu238 is a catalytic residue. His255 (proton donor) is an active-site residue. Residue Gly258 participates in NAD(+) binding. Position 259 (Tyr259) interacts with substrate.

Belongs to the D-isomer specific 2-hydroxyacid dehydrogenase family. PdxB subfamily. As to quaternary structure, homodimer.

It localises to the cytoplasm. The enzyme catalyses 4-phospho-D-erythronate + NAD(+) = (R)-3-hydroxy-2-oxo-4-phosphooxybutanoate + NADH + H(+). It participates in cofactor biosynthesis; pyridoxine 5'-phosphate biosynthesis; pyridoxine 5'-phosphate from D-erythrose 4-phosphate: step 2/5. In terms of biological role, catalyzes the oxidation of erythronate-4-phosphate to 3-hydroxy-2-oxo-4-phosphonooxybutanoate. This chain is Erythronate-4-phosphate dehydrogenase, found in Shewanella loihica (strain ATCC BAA-1088 / PV-4).